Here is a 255-residue protein sequence, read N- to C-terminus: Lipoprotein-releasing system ATP-binding protein LolD 2 (255 aa).

One can recognise an ABC transporter domain in the interval 9–254 (LEARGIRKSY…SDSAKLETVA (246 aa)). An ATP-binding site is contributed by 45 to 52 (GRSGSGKS).

It belongs to the ABC transporter superfamily. Lipoprotein translocase (TC 3.A.1.125) family. As to quaternary structure, the complex is composed of two ATP-binding proteins (LolD) and two transmembrane proteins (LolC and LolE).

The protein resides in the cell inner membrane. Functionally, part of the ABC transporter complex LolCDE involved in the translocation of mature outer membrane-directed lipoproteins, from the inner membrane to the periplasmic chaperone, LolA. Responsible for the formation of the LolA-lipoprotein complex in an ATP-dependent manner. The protein is Lipoprotein-releasing system ATP-binding protein LolD 2 of Rhodopirellula baltica (strain DSM 10527 / NCIMB 13988 / SH1).